A 450-amino-acid polypeptide reads, in one-letter code: Phosphoglucosamine mutase (450 aa).

The active-site Phosphoserine intermediate is the Ser97. Mg(2+) contacts are provided by Ser97, Asp236, Asp238, and Asp240. The residue at position 97 (Ser97) is a Phosphoserine.

The protein belongs to the phosphohexose mutase family. Mg(2+) is required as a cofactor. Activated by phosphorylation.

It carries out the reaction alpha-D-glucosamine 1-phosphate = D-glucosamine 6-phosphate. Catalyzes the conversion of glucosamine-6-phosphate to glucosamine-1-phosphate. This chain is Phosphoglucosamine mutase, found in Prochlorococcus marinus (strain AS9601).